Reading from the N-terminus, the 423-residue chain is MDIDQYMTDLGRRARHASRAMARASTAAKNAALDAVARAIERDAQALKDANARDVARAREKGLDAAFVDRLTLSDKALKTMVEGLRQVASLADPIGEIGNLKFRPSGIQVGQMRVPLGVIGIIYESRPNVTIDAAALCLKSGNATILRGGSEALESNAALAKLIGEGLEAAGLPQDAVQVVATADRAAVGKLITMTEYVDVIVPRGGKSLIERLINEARVPMIKHLDGICHVYVDDRADLAKALTVCDNAKTHRYGTCNTMETLLVASGIAAKLLPRLGKLYRDKQVELRVDAAARAVLADAGVGPLVDATEEDWHTEYLAPVLAIKVVDGLDAAIEHINHYGSHHTDAIVTEDHDRAMRFLREVDSASVMVNASTRFADGFEFGLGAEIGISNDKLHARGPVGLEGLTSLKYVVLGHGEGRQ.

It belongs to the gamma-glutamyl phosphate reductase family.

Its subcellular location is the cytoplasm. The enzyme catalyses L-glutamate 5-semialdehyde + phosphate + NADP(+) = L-glutamyl 5-phosphate + NADPH + H(+). It participates in amino-acid biosynthesis; L-proline biosynthesis; L-glutamate 5-semialdehyde from L-glutamate: step 2/2. In terms of biological role, catalyzes the NADPH-dependent reduction of L-glutamate 5-phosphate into L-glutamate 5-semialdehyde and phosphate. The product spontaneously undergoes cyclization to form 1-pyrroline-5-carboxylate. The protein is Gamma-glutamyl phosphate reductase of Burkholderia orbicola (strain MC0-3).